A 212-amino-acid chain; its full sequence is Thymidylate kinase (212 aa).

Position 10 to 17 (10 to 17) interacts with ATP; that stretch reads GPEGAGKT.

Belongs to the thymidylate kinase family.

It catalyses the reaction dTMP + ATP = dTDP + ADP. Its function is as follows. Phosphorylation of dTMP to form dTDP in both de novo and salvage pathways of dTTP synthesis. This chain is Thymidylate kinase, found in Bacillus licheniformis (strain ATCC 14580 / DSM 13 / JCM 2505 / CCUG 7422 / NBRC 12200 / NCIMB 9375 / NCTC 10341 / NRRL NRS-1264 / Gibson 46).